We begin with the raw amino-acid sequence, 396 residues long: Elongation factor Tu (396 aa).

The tr-type G domain maps to 10-206; that stretch reads KPHVNVGTIG…ALDTYIPTPE (197 aa). The segment at 19–26 is G1; it reads GHVDHGKT. 19-26 contacts GTP; that stretch reads GHVDHGKT. Position 26 (Thr-26) interacts with Mg(2+). Residues 60–64 are G2; that stretch reads GITIN. Residues 81–84 form a G3 region; it reads DCPG. Residues 81 to 85 and 136 to 139 contribute to the GTP site; these read DCPGH and NKCD. Residues 136–139 are G4; that stretch reads NKCD. The tract at residues 174–176 is G5; that stretch reads SAK.

Belongs to the TRAFAC class translation factor GTPase superfamily. Classic translation factor GTPase family. EF-Tu/EF-1A subfamily. In terms of assembly, monomer.

It localises to the cytoplasm. It carries out the reaction GTP + H2O = GDP + phosphate + H(+). In terms of biological role, GTP hydrolase that promotes the GTP-dependent binding of aminoacyl-tRNA to the A-site of ribosomes during protein biosynthesis. This chain is Elongation factor Tu, found in Cupriavidus pinatubonensis (strain JMP 134 / LMG 1197) (Cupriavidus necator (strain JMP 134)).